Reading from the N-terminus, the 273-residue chain is 4-hydroxy-tetrahydrodipicolinate reductase (273 aa).

NAD(+)-binding positions include 12 to 17 and glutamate 38; that span reads GAGGRM. Arginine 39 contributes to the NADP(+) binding site. Residues 102-104 and 126-129 contribute to the NAD(+) site; these read GTT and AANF. Histidine 159 serves as the catalytic Proton donor/acceptor. Position 160 (histidine 160) interacts with (S)-2,3,4,5-tetrahydrodipicolinate. The Proton donor role is filled by lysine 163. 169–170 contacts (S)-2,3,4,5-tetrahydrodipicolinate; sequence GT.

Belongs to the DapB family. In terms of assembly, homotetramer.

It localises to the cytoplasm. It carries out the reaction (S)-2,3,4,5-tetrahydrodipicolinate + NAD(+) + H2O = (2S,4S)-4-hydroxy-2,3,4,5-tetrahydrodipicolinate + NADH + H(+). It catalyses the reaction (S)-2,3,4,5-tetrahydrodipicolinate + NADP(+) + H2O = (2S,4S)-4-hydroxy-2,3,4,5-tetrahydrodipicolinate + NADPH + H(+). Its pathway is amino-acid biosynthesis; L-lysine biosynthesis via DAP pathway; (S)-tetrahydrodipicolinate from L-aspartate: step 4/4. Catalyzes the conversion of 4-hydroxy-tetrahydrodipicolinate (HTPA) to tetrahydrodipicolinate. This Shigella boydii serotype 4 (strain Sb227) protein is 4-hydroxy-tetrahydrodipicolinate reductase.